A 151-amino-acid chain; its full sequence is Large ribosomal subunit protein uL13 (151 aa).

The protein belongs to the universal ribosomal protein uL13 family. Part of the 50S ribosomal subunit.

This protein is one of the early assembly proteins of the 50S ribosomal subunit, although it is not seen to bind rRNA by itself. It is important during the early stages of 50S assembly. The protein is Large ribosomal subunit protein uL13 of Synechocystis sp. (strain ATCC 27184 / PCC 6803 / Kazusa).